The following is a 224-amino-acid chain: Cytochrome c biogenesis ATP-binding export protein CcmA (224 aa).

In terms of domain architecture, ABC transporter spans 1–220 (MQNAEAAPAL…EYAHAEVVGA (220 aa)). ATP is bound at residue 40–47 (GANGSGKT).

Belongs to the ABC transporter superfamily. CcmA exporter (TC 3.A.1.107) family. In terms of assembly, the complex is composed of two ATP-binding proteins (CcmA) and two transmembrane proteins (CcmB).

It localises to the cell inner membrane. It carries out the reaction heme b(in) + ATP + H2O = heme b(out) + ADP + phosphate + H(+). Part of the ABC transporter complex CcmAB involved in the biogenesis of c-type cytochromes; once thought to export heme, this seems not to be the case, but its exact role is uncertain. Responsible for energy coupling to the transport system. This Bordetella bronchiseptica (strain ATCC BAA-588 / NCTC 13252 / RB50) (Alcaligenes bronchisepticus) protein is Cytochrome c biogenesis ATP-binding export protein CcmA.